Reading from the N-terminus, the 580-residue chain is Probable glucomannan 4-beta-mannosyltransferase 2 (580 aa).

Over residues 1–12 (MSTNGGAPSQKR) the composition is skewed to polar residues. Positions 1-33 (MSTNGGAPSQKRSWLPSRPLLTTTTQTYPPPLL) are disordered. Over residues 15 to 27 (LPSRPLLTTTTQT) the composition is skewed to low complexity. A helical membrane pass occupies residues 85-105 (AVWACLAMSAMLVAEAAWMGL). D182 is an active-site residue. Substrate-binding residues include D241 and D243. D335 is an active-site residue. 4 helical membrane-spanning segments follow: residues 414 to 434 (AIAPILTFLFYCIVIPLSAMV), 437 to 457 (VTIPVWGLVYIPTAITIMNAI), 528 to 548 (IYIPELLLALYLLICASYDFV), and 554 to 574 (YYIYIYLQAVAFTVMGFGFVG).

The protein belongs to the glycosyltransferase 2 family. Plant cellulose synthase-like A subfamily.

The protein localises to the golgi apparatus membrane. The enzyme catalyses GDP-mannose + (glucomannan)n = GDP + (glucomannan)n+1.. Functionally, probable mannan synthase which consists of a 4-beta-mannosyltransferase activity on mannan using GDP-mannose. The beta-1,4-mannan product is the backbone for galactomannan synthesis by galactomannan galactosyltransferase. Galactomannan is a noncellulosic polysaccharides of plant cell wall. The protein is Probable glucomannan 4-beta-mannosyltransferase 2 of Oryza sativa subsp. japonica (Rice).